A 424-amino-acid chain; its full sequence is Glutamate-1-semialdehyde 2,1-aminomutase (424 aa).

Lys260 is modified (N6-(pyridoxal phosphate)lysine).

It belongs to the class-III pyridoxal-phosphate-dependent aminotransferase family. HemL subfamily. Pyridoxal 5'-phosphate serves as cofactor.

Its subcellular location is the cytoplasm. It carries out the reaction (S)-4-amino-5-oxopentanoate = 5-aminolevulinate. It participates in porphyrin-containing compound metabolism; protoporphyrin-IX biosynthesis; 5-aminolevulinate from L-glutamyl-tRNA(Glu): step 2/2. This Nitrosopumilus maritimus (strain SCM1) protein is Glutamate-1-semialdehyde 2,1-aminomutase.